The primary structure comprises 113 residues: Putative increased recombination centers protein 14 (113 aa).

The polypeptide is Putative increased recombination centers protein 14 (IRC14) (Saccharomyces cerevisiae (strain ATCC 204508 / S288c) (Baker's yeast)).